Here is a 164-residue protein sequence, read N- to C-terminus: MKTYRRQIREKILQALYTIELRDTDIDSAAGWLLTQEILDDPNAMKFFNMLIGSIKAHMSEIDCYIERHTFNWDMSRIAIIDKNILRMALAEILYCEDIPPKVSINEAIEIAKKFSSTEKSSKFVNGILDAIFNELKTDGKIHKNGRGLIDHSTAKLHKNETSK.

Belongs to the NusB family.

Involved in transcription antitermination. Required for transcription of ribosomal RNA (rRNA) genes. Binds specifically to the boxA antiterminator sequence of the ribosomal RNA (rrn) operons. This Chlorobium limicola (strain DSM 245 / NBRC 103803 / 6330) protein is Transcription antitermination protein NusB.